The following is a 409-amino-acid chain: Formyl-CoA:oxalate CoA-transferase (409 aa).

Residues 17–18 (QS), 71–74 (LNTK), 95–97 (NFG), arginine 103, and 135–138 (KAYE) contribute to the CoA site. Aspartate 167 (nucleophile) is an active-site residue. A disordered region spans residues 221–245 (LAEYPNDDFGDEVPRSGNASGGGQP). 242 to 244 (GGQ) is a binding site for substrate.

This sequence belongs to the CoA-transferase III family. Frc subfamily. As to quaternary structure, homodimer.

It carries out the reaction formyl-CoA + oxalate = oxalyl-CoA + formate. The protein operates within metabolic intermediate degradation; oxalate degradation; CO(2) and formate from oxalate: step 1/2. In terms of biological role, involved in the catabolism of oxalate and in the adapatation to low pH via the induction of the oxalate-dependent acid tolerance response (ATR). Catalyzes the transfer of the CoA moiety from formyl-CoA to oxalate. In Streptomyces avermitilis (strain ATCC 31267 / DSM 46492 / JCM 5070 / NBRC 14893 / NCIMB 12804 / NRRL 8165 / MA-4680), this protein is Formyl-CoA:oxalate CoA-transferase.